Here is a 264-residue protein sequence, read N- to C-terminus: tRNA pseudouridine synthase A (264 aa).

The active-site Nucleophile is the D51. Residue Y109 coordinates substrate.

This sequence belongs to the tRNA pseudouridine synthase TruA family. In terms of assembly, homodimer.

The catalysed reaction is uridine(38/39/40) in tRNA = pseudouridine(38/39/40) in tRNA. Formation of pseudouridine at positions 38, 39 and 40 in the anticodon stem and loop of transfer RNAs. This Vibrio vulnificus (strain CMCP6) protein is tRNA pseudouridine synthase A.